We begin with the raw amino-acid sequence, 328 residues long: H-2 class I histocompatibility antigen, K-Q alpha chain (328 aa).

The interval 1–71 is alpha-1; the sequence is PRFISVGYVD…LLRYYNQSAG (71 aa). The Extracellular segment spans residues 1-265; sequence PRFISVGYVD…EPPPSAVSNT (265 aa). Asn67 carries an N-linked (GlcNAc...) asparagine glycan. The segment at 72–163 is alpha-2; the sequence is GSHTIQRMYG…KNGNATLLRT (92 aa). Cys82 and Cys145 form a disulfide bridge. A glycan (N-linked (GlcNAc...) asparagine) is linked at Asn157. Residues 164–255 form an alpha-3 region; the sequence is DSPKAHVTHH…GLPKPLTLRW (92 aa). The Ig-like C1-type domain occupies 166–252; the sequence is PKAHVTHHSR…YHQGLPKPLT (87 aa). An intrachain disulfide couples Cys184 to Cys240. The connecting peptide stretch occupies residues 256–265; that stretch reads EPPPSAVSNT. Residues 266–289 form a helical membrane-spanning segment; it reads VIIAVLVVLGAAIVTGAVVAFVMM. The Cytoplasmic segment spans residues 290–328; sequence RRRNTGGKGGDYALAPGSQTSDLSLPDCKVMVHDPHSLA. Phosphoserine occurs at positions 310 and 313.

Belongs to the MHC class I family. In terms of assembly, heterodimer of an alpha chain and a beta chain (beta-2-microglobulin).

The protein localises to the membrane. In terms of biological role, involved in the presentation of foreign antigens to the immune system. The protein is H-2 class I histocompatibility antigen, K-Q alpha chain (H2-K1) of Mus musculus (Mouse).